The following is a 207-amino-acid chain: 3-hexulose-6-phosphate synthase (207 aa).

The protein belongs to the HPS/KGPDC family. HPS subfamily.

It carries out the reaction D-ribulose 5-phosphate + formaldehyde = D-arabino-hex-3-ulose 6-phosphate. It participates in one-carbon metabolism; formaldehyde assimilation via RuMP pathway; D-fructose 6-phosphate from D-ribulose 5-phosphate and formaldehyde: step 1/2. Its function is as follows. Catalyzes the condensation of ribulose 5-phosphate with formaldehyde to form 3-hexulose 6-phosphate. The sequence is that of 3-hexulose-6-phosphate synthase (rmpA) from Mycobacterium gastri.